The sequence spans 569 residues: Potassium-transporting ATPase potassium-binding subunit (569 aa).

Helical transmembrane passes span 11–31 (LLLA…ACVF), 64–84 (LAYT…LYGI), 135–155 (AGLA…ALAV), 179–199 (LYLL…MGIP), 258–278 (FNIL…GKMV), 285–305 (WALI…VYIA), 384–404 (GLYG…LMVG), 423–443 (MLAV…AAVL), 490–510 (LGIS…AIAG), and 531–551 (LFVG…YFPA).

This sequence belongs to the KdpA family. As to quaternary structure, the system is composed of three essential subunits: KdpA, KdpB and KdpC.

It is found in the cell inner membrane. Part of the high-affinity ATP-driven potassium transport (or Kdp) system, which catalyzes the hydrolysis of ATP coupled with the electrogenic transport of potassium into the cytoplasm. This subunit binds the periplasmic potassium ions and delivers the ions to the membrane domain of KdpB through an intramembrane tunnel. In Allorhizobium ampelinum (strain ATCC BAA-846 / DSM 112012 / S4) (Agrobacterium vitis (strain S4)), this protein is Potassium-transporting ATPase potassium-binding subunit.